The primary structure comprises 263 residues: Proteasome subunit alpha type-1 (263 aa).

Position 1 is an N-acetylmethionine (Met-1). Ser-110 carries the post-translational modification Phosphoserine; alternate. Residue Ser-110 is glycosylated (O-linked (GlcNAc) serine; alternate). Residue Lys-115 forms a Glycyl lysine isopeptide (Lys-Gly) (interchain with G-Cter in ubiquitin) linkage. Ser-177 bears the Phosphoserine mark. Residue Lys-208 forms a Glycyl lysine isopeptide (Lys-Gly) (interchain with G-Cter in ubiquitin) linkage. The segment at 232 to 263 (FLEGLEERPQRKAQPAQPADEPAEKADEPMEH) is disordered. The segment covering 253-263 (PAEKADEPMEH) has biased composition (basic and acidic residues).

It belongs to the peptidase T1A family. In terms of assembly, the 26S proteasome consists of a 20S proteasome core and two 19S regulatory subunits. The 20S proteasome core is a barrel-shaped complex made of 28 subunits that are arranged in four stacked rings. The two outer rings are each formed by seven alpha subunits, and the two inner rings are formed by seven beta subunits. The proteolytic activity is exerted by three beta-subunits PSMB5, PSMB6 and PSMB7. Interacts with NOTCH3. Interacts with ZFAND1.

It localises to the cytoplasm. It is found in the nucleus. Its function is as follows. Component of the 20S core proteasome complex involved in the proteolytic degradation of most intracellular proteins. This complex plays numerous essential roles within the cell by associating with different regulatory particles. Associated with two 19S regulatory particles, forms the 26S proteasome and thus participates in the ATP-dependent degradation of ubiquitinated proteins. The 26S proteasome plays a key role in the maintenance of protein homeostasis by removing misfolded or damaged proteins that could impair cellular functions, and by removing proteins whose functions are no longer required. Associated with the PA200 or PA28, the 20S proteasome mediates ubiquitin-independent protein degradation. This type of proteolysis is required in several pathways including spermatogenesis (20S-PA200 complex) or generation of a subset of MHC class I-presented antigenic peptides (20S-PA28 complex). The chain is Proteasome subunit alpha type-1 (PSMA1) from Macaca fascicularis (Crab-eating macaque).